A 460-amino-acid polypeptide reads, in one-letter code: 3-isopropylmalate dehydratase large subunit (460 aa).

3 residues coordinate [4Fe-4S] cluster: C341, C401, and C404.

It belongs to the aconitase/IPM isomerase family. LeuC type 1 subfamily. Heterodimer of LeuC and LeuD. The cofactor is [4Fe-4S] cluster.

It carries out the reaction (2R,3S)-3-isopropylmalate = (2S)-2-isopropylmalate. It functions in the pathway amino-acid biosynthesis; L-leucine biosynthesis; L-leucine from 3-methyl-2-oxobutanoate: step 2/4. Its function is as follows. Catalyzes the isomerization between 2-isopropylmalate and 3-isopropylmalate, via the formation of 2-isopropylmaleate. This chain is 3-isopropylmalate dehydratase large subunit, found in Phocaeicola vulgatus (strain ATCC 8482 / DSM 1447 / JCM 5826 / CCUG 4940 / NBRC 14291 / NCTC 11154) (Bacteroides vulgatus).